The following is a 200-amino-acid chain: Ankyrin repeat-containing protein YAR1 (200 aa).

ANK repeat units follow at residues 49–78 (SDSTALHMAAANGHIETVRYILETVSRANS) and 92–121 (TGNTALHWASLNGKLDVVKLLCDEYEADPF). A Phosphoserine modification is found at S78. The interval 152–173 (VEPEDDEEDTQTEGKNSVQITK) is disordered. A compositionally biased stretch (acidic residues) spans 153–162 (EPEDDEEDTQ). Positions 164–173 (EGKNSVQITK) are enriched in polar residues.

Functionally, required for normal rate of cell proliferation. The polypeptide is Ankyrin repeat-containing protein YAR1 (YAR1) (Saccharomyces cerevisiae (strain ATCC 204508 / S288c) (Baker's yeast)).